The following is a 332-amino-acid chain: MEAIINKLYEQQSLTQEESQQLFDIIIRGELDPILMASALTALKIKGETPDEIAGAAKALLANANPFPRPDYDFADIVGTGGDGHNTINISTTAAFVAAACGLKVAKHGNRSVSSKSGSSDLLDSFGINLAMSAEDTRKAVDDIGVAFLFAPQYHGGVRHAMPVRQTMKTRTIFNILGPLINPARPNIELMGVYSEELVRPIAETMLQMGMKRAAVVHGSGLDEVAIHGTTTVAEIKDGKITEYTLTPEDFGLESHPLEAIKGGDPEENKAIITNILTGKGTDAQLGAVAVNVALLMRLFGHEDLKANTQQAIEAMNSGKAYQLVQQLAAHA.

Residues Gly-79, 82–83, Thr-87, 89–92, 107–115, and Ser-119 contribute to the 5-phospho-alpha-D-ribose 1-diphosphate site; these read GD, NIST, and KHGNRSVSS. Residue Gly-79 coordinates anthranilate. Ser-91 contributes to the Mg(2+) binding site. Asn-110 is a binding site for anthranilate. Arg-165 serves as a coordination point for anthranilate. Residues Asp-223 and Glu-224 each coordinate Mg(2+).

It belongs to the anthranilate phosphoribosyltransferase family. In terms of assembly, homodimer. Mg(2+) serves as cofactor.

It carries out the reaction N-(5-phospho-beta-D-ribosyl)anthranilate + diphosphate = 5-phospho-alpha-D-ribose 1-diphosphate + anthranilate. It participates in amino-acid biosynthesis; L-tryptophan biosynthesis; L-tryptophan from chorismate: step 2/5. Its function is as follows. Catalyzes the transfer of the phosphoribosyl group of 5-phosphorylribose-1-pyrophosphate (PRPP) to anthranilate to yield N-(5'-phosphoribosyl)-anthranilate (PRA). The sequence is that of Anthranilate phosphoribosyltransferase from Vibrio parahaemolyticus serotype O3:K6 (strain RIMD 2210633).